The following is a 341-amino-acid chain: Phenylalanine--tRNA ligase alpha subunit (341 aa).

Position 254 (Glu254) interacts with Mg(2+).

It belongs to the class-II aminoacyl-tRNA synthetase family. Phe-tRNA synthetase alpha subunit type 1 subfamily. In terms of assembly, tetramer of two alpha and two beta subunits. Mg(2+) serves as cofactor.

It localises to the cytoplasm. The enzyme catalyses tRNA(Phe) + L-phenylalanine + ATP = L-phenylalanyl-tRNA(Phe) + AMP + diphosphate + H(+). This chain is Phenylalanine--tRNA ligase alpha subunit, found in Chlorobium limicola (strain DSM 245 / NBRC 103803 / 6330).